A 506-amino-acid polypeptide reads, in one-letter code: 2-isopropylmalate synthase (506 aa).

The region spanning Ile-4–Lys-266 is the Pyruvate carboxyltransferase domain. Mn(2+) is bound by residues Asp-13, His-201, His-203, and Asn-237. Positions Asn-390 to Lys-506 are regulatory domain.

It belongs to the alpha-IPM synthase/homocitrate synthase family. LeuA type 1 subfamily. Homodimer. Mn(2+) is required as a cofactor.

The protein resides in the cytoplasm. The catalysed reaction is 3-methyl-2-oxobutanoate + acetyl-CoA + H2O = (2S)-2-isopropylmalate + CoA + H(+). It participates in amino-acid biosynthesis; L-leucine biosynthesis; L-leucine from 3-methyl-2-oxobutanoate: step 1/4. Catalyzes the condensation of the acetyl group of acetyl-CoA with 3-methyl-2-oxobutanoate (2-ketoisovalerate) to form 3-carboxy-3-hydroxy-4-methylpentanoate (2-isopropylmalate). The sequence is that of 2-isopropylmalate synthase from Bacillus cereus (strain ATCC 10987 / NRS 248).